The primary structure comprises 233 residues: uncharacterized protein (233 aa).

This sequence belongs to the RHS family.

This is an uncharacterized protein from Escherichia coli (strain K12).